Consider the following 101-residue polypeptide: Feather keratin Cos1-1/Cos1-3/Cos2-1 (101 aa).

Serine 2 carries the post-translational modification N-acetylserine.

It belongs to the avian keratin family. The avian keratins (F-ker, S-ker, C-ker and B-ker) are a complex mixture of very similar polypeptides.

This Columba livia (Rock dove) protein is Feather keratin Cos1-1/Cos1-3/Cos2-1.